A 101-amino-acid chain; its full sequence is NAD(P)H-quinone oxidoreductase subunit 4L, chloroplastic (101 aa).

A run of 3 helical transmembrane segments spans residues 2-22, 30-52, and 61-81; these read ILEH…YGLI, ALMC…SDFF, and IFSI…LAIV.

The protein belongs to the complex I subunit 4L family. In terms of assembly, NDH is composed of at least 16 different subunits, 5 of which are encoded in the nucleus.

The protein localises to the plastid. It localises to the chloroplast thylakoid membrane. The enzyme catalyses a plastoquinone + NADH + (n+1) H(+)(in) = a plastoquinol + NAD(+) + n H(+)(out). It catalyses the reaction a plastoquinone + NADPH + (n+1) H(+)(in) = a plastoquinol + NADP(+) + n H(+)(out). NDH shuttles electrons from NAD(P)H:plastoquinone, via FMN and iron-sulfur (Fe-S) centers, to quinones in the photosynthetic chain and possibly in a chloroplast respiratory chain. The immediate electron acceptor for the enzyme in this species is believed to be plastoquinone. Couples the redox reaction to proton translocation, and thus conserves the redox energy in a proton gradient. This is NAD(P)H-quinone oxidoreductase subunit 4L, chloroplastic from Oenothera glazioviana (Large-flowered evening primrose).